The sequence spans 371 residues: Queuine tRNA-ribosyltransferase (371 aa).

Asp90 serves as the catalytic Proton acceptor. Substrate-binding positions include 90–94 (DSGGF), Asp144, Gln188, and Gly215. The tract at residues 246–252 (GVGTPED) is RNA binding. The Nucleophile role is filled by Asp265. The tract at residues 270–274 (TRNAR) is RNA binding; important for wobble base 34 recognition. Zn(2+) contacts are provided by Cys303, Cys305, Cys308, and His334.

Belongs to the queuine tRNA-ribosyltransferase family. In terms of assembly, homodimer. Within each dimer, one monomer is responsible for RNA recognition and catalysis, while the other monomer binds to the replacement base PreQ1. Requires Zn(2+) as cofactor.

It catalyses the reaction 7-aminomethyl-7-carbaguanine + guanosine(34) in tRNA = 7-aminomethyl-7-carbaguanosine(34) in tRNA + guanine. Its pathway is tRNA modification; tRNA-queuosine biosynthesis. Functionally, catalyzes the base-exchange of a guanine (G) residue with the queuine precursor 7-aminomethyl-7-deazaguanine (PreQ1) at position 34 (anticodon wobble position) in tRNAs with GU(N) anticodons (tRNA-Asp, -Asn, -His and -Tyr). Catalysis occurs through a double-displacement mechanism. The nucleophile active site attacks the C1' of nucleotide 34 to detach the guanine base from the RNA, forming a covalent enzyme-RNA intermediate. The proton acceptor active site deprotonates the incoming PreQ1, allowing a nucleophilic attack on the C1' of the ribose to form the product. After dissociation, two additional enzymatic reactions on the tRNA convert PreQ1 to queuine (Q), resulting in the hypermodified nucleoside queuosine (7-(((4,5-cis-dihydroxy-2-cyclopenten-1-yl)amino)methyl)-7-deazaguanosine). The sequence is that of Queuine tRNA-ribosyltransferase from Neisseria meningitidis serogroup C / serotype 2a (strain ATCC 700532 / DSM 15464 / FAM18).